We begin with the raw amino-acid sequence, 341 residues long: Glycerol-3-phosphate dehydrogenase [NAD(P)+] (341 aa).

The NADPH site is built by Ser11, Trp12, Arg32, and Lys106. Sn-glycerol 3-phosphate-binding residues include Lys106, Gly137, and Thr139. Ala141 provides a ligand contact to NADPH. The sn-glycerol 3-phosphate site is built by Lys192, Asp245, Ser255, Arg256, and Asn257. The active-site Proton acceptor is Lys192. Arg256 serves as a coordination point for NADPH. NADPH-binding residues include Val280 and Glu282.

Belongs to the NAD-dependent glycerol-3-phosphate dehydrogenase family.

The protein resides in the cytoplasm. It carries out the reaction sn-glycerol 3-phosphate + NAD(+) = dihydroxyacetone phosphate + NADH + H(+). It catalyses the reaction sn-glycerol 3-phosphate + NADP(+) = dihydroxyacetone phosphate + NADPH + H(+). The protein operates within membrane lipid metabolism; glycerophospholipid metabolism. Its function is as follows. Catalyzes the reduction of the glycolytic intermediate dihydroxyacetone phosphate (DHAP) to sn-glycerol 3-phosphate (G3P), the key precursor for phospholipid synthesis. This is Glycerol-3-phosphate dehydrogenase [NAD(P)+] from Exiguobacterium sp. (strain ATCC BAA-1283 / AT1b).